Consider the following 1185-residue polypeptide: Chromosome partition protein Smc (1185 aa).

An ATP-binding site is contributed by 32–39; that stretch reads PNGSGKSN. Residues 228–503 are a coiled coil; it reads SRLVKKLTIA…LQAVQERYTN (276 aa). Positions 300-323 are disordered; the sequence is TQGQQGVDAERRQNQQSEQERLTA. A compositionally biased stretch (basic and acidic residues) spans 307-320; sequence DAERRQNQQSEQER. The region spanning 519–637 is the SMC hinge domain; sequence SGVAGAVSEL…VDTLDHAMAI (119 aa). Coiled-coil stretches lie at residues 675–928 and 989–1025; these read QQQQ…RRLE and AIDE…ADLD.

This sequence belongs to the SMC family. As to quaternary structure, homodimer.

It localises to the cytoplasm. Its function is as follows. Required for chromosome condensation and partitioning. This Lactiplantibacillus plantarum (strain ATCC BAA-793 / NCIMB 8826 / WCFS1) (Lactobacillus plantarum) protein is Chromosome partition protein Smc.